Here is a 283-residue protein sequence, read N- to C-terminus: Peflin (283 aa).

A run of 8 repeats spans residues 21–30 (PQTNYYGGQQ), 36–44 (QPAASYGRP), 45–54 (APGAPYGSPP), 55–62 (SGGVYGHP), 71–79 (APGGPYGGQ), 80–87 (APGGPYSV), 88–95 (PGSTPYGS), and 96–104 (QQHGSYGQG). The 8 X 9 AA approximate tandem repeat of [AP]-P-G-G-P-Y-G-G-P-P stretch occupies residues 21–104 (PQTNYYGGQQ…SQQHGSYGQG (84 aa)). The segment covering 37-70 (PAASYGRPAPGAPYGSPPSGGVYGHPVPGSAAPG) has biased composition (low complexity). Positions 37-113 (PAASYGRPAP…GAPAGNIPPG (77 aa)) are disordered. Residues 71–81 (APGGPYGGQAP) show a composition bias toward gly residues. Positions 93–104 (YGSQQHGSYGQG) are enriched in low complexity. 5 consecutive EF-hand domains span residues 113–148 (GVDP…TNWS), 154–179 (TCTM…SALW), 180–215 (RFIQ…MGYQ), 216–252 (LSPQ…LQSM), and 253–282 (TEAF…TTRL). Ca(2+)-binding residues include Asp-126, Asp-128, Ser-130, Tyr-132, and Glu-137. 5 residues coordinate Ca(2+): Asp-193, Asp-195, Ser-197, Ser-199, and Glu-204.

As to quaternary structure, heterodimer; heterodimerizes (via the EF-hand 5) with pdcd6.

Its subcellular location is the cytoplasm. It is found in the endoplasmic reticulum. The protein resides in the membrane. It localises to the cytoplasmic vesicle. The protein localises to the COPII-coated vesicle membrane. Its function is as follows. Calcium-binding protein that acts as an adapter that bridges unrelated proteins or stabilizes weak protein-protein complexes in response to calcium. Acts as a negative regulator of ER-Golgi transport. The polypeptide is Peflin (Xenopus laevis (African clawed frog)).